Reading from the N-terminus, the 298-residue chain is Biphenyl-2,3-diol 1,2-dioxygenase (298 aa).

2 consecutive VOC domains span residues 5–119 (SLGY…IYYG) and 143–264 (GLGH…YGWS). Fe cation is bound by residues His-146, His-210, and Glu-260.

The protein belongs to the extradiol ring-cleavage dioxygenase family. Homooctamer. The enzyme is composed of two planar tetramers rotated at 45 degrees relative to each other, with a channel in the middle. Fe(2+) serves as cofactor.

It catalyses the reaction biphenyl-2,3-diol + O2 = 2-hydroxy-6-oxo-6-phenylhexa-2,4-dienoate + H(+). It participates in xenobiotic degradation; biphenyl degradation; 2-hydroxy-2,4-pentadienoate and benzoate from biphenyl: step 3/4. Its function is as follows. Shows a preference for catechols with groups immediately adjacent to the hydroxyl substituents. This Paraburkholderia xenovorans (strain LB400) protein is Biphenyl-2,3-diol 1,2-dioxygenase (bphC).